The chain runs to 534 residues: Probable protein kinase UbiB (534 aa).

A helical transmembrane segment spans residues 23–43 (DLLFDLPLPWFLLALRYVLPW). A Protein kinase domain is found at 125 to 492 (RFDVEPLASA…WKKRKDDWFL (368 aa)). ATP is bound by residues 131 to 139 (LASASVAQV) and Lys153. Catalysis depends on Asp288, which acts as the Proton acceptor. 2 consecutive transmembrane segments (helical) span residues 490–510 (WFLR…AAGG) and 512–532 (LHEL…YLVV).

Belongs to the ABC1 family. UbiB subfamily.

It is found in the cell inner membrane. It functions in the pathway cofactor biosynthesis; ubiquinone biosynthesis [regulation]. Functionally, is probably a protein kinase regulator of UbiI activity which is involved in aerobic coenzyme Q (ubiquinone) biosynthesis. This Pseudomonas fluorescens (strain Pf0-1) protein is Probable protein kinase UbiB.